A 608-amino-acid polypeptide reads, in one-letter code: Dolichyl-diphosphooligosaccharide--protein glycosyltransferase subunit 1 (608 aa).

An N-terminal signal peptide occupies residues 1 to 25; sequence MESPVALLLLLLLCLGALAPTPGSA. The Lumenal portion of the chain corresponds to 26-440; it reads SSEAPPLVNE…FNKVLMLQEP (415 aa). Lysine 188 is subject to N6-acetyllysine. Asparagine 300 is a glycosylation site (N-linked (GlcNAc...) asparagine). The chain crosses the membrane as a helical span at residues 441–458; that stretch reads LLVVAAFYILFFTVIIYV. The Cytoplasmic portion of the chain corresponds to 459–608; that stretch reads RLDFSITKDP…TKIDHILDAL (150 aa). Lysine 539 is modified (N6-acetyllysine; alternate). A Glycyl lysine isopeptide (Lys-Gly) (interchain with G-Cter in SUMO2); alternate cross-link involves residue lysine 539.

It belongs to the OST1 family. Component of the oligosaccharyltransferase (OST) complex. OST exists in two different complex forms which contain common core subunits RPN1, RPN2, OST48, OST4, DAD1 and TMEM258, either STT3A or STT3B as catalytic subunits, and form-specific accessory subunits. STT3A complex assembly occurs through the formation of 3 subcomplexes. Subcomplex 1 contains RPN1 and TMEM258, subcomplex 2 contains the STT3A-specific subunits STT3A, DC2/OSTC, and KCP2 as well as the core subunit OST4, and subcomplex 3 contains RPN2, DAD1, and OST48. The STT3A complex can form stable complexes with the Sec61 complex or with both the Sec61 and TRAP complexes. Interacts with TMEM35A/NACHO. Post-translationally, ubiquitinated by the ECS(ASB11) complex. Ubiquitinated by RNF128, leading to degradation in a proteasome/lysosome-dependent manner. In terms of processing, ufmylated by UFL1 in response to endoplasmic reticulum stress, promoting reticulophagy of endoplasmic reticulum sheets.

The protein resides in the endoplasmic reticulum membrane. The protein operates within protein modification; protein glycosylation. In terms of biological role, subunit of the oligosaccharyl transferase (OST) complex that catalyzes the initial transfer of a defined glycan (Glc(3)Man(9)GlcNAc(2) in eukaryotes) from the lipid carrier dolichol-pyrophosphate to an asparagine residue within an Asn-X-Ser/Thr consensus motif in nascent polypeptide chains, the first step in protein N-glycosylation. N-glycosylation occurs cotranslationally and the complex associates with the Sec61 complex at the channel-forming translocon complex that mediates protein translocation across the endoplasmic reticulum (ER). All subunits are required for a maximal enzyme activity. The polypeptide is Dolichyl-diphosphooligosaccharide--protein glycosyltransferase subunit 1 (Mus musculus (Mouse)).